The primary structure comprises 156 residues: Small ribosomal subunit protein uS7 (156 aa).

This sequence belongs to the universal ribosomal protein uS7 family. Part of the 30S ribosomal subunit. Contacts proteins S9 and S11.

In terms of biological role, one of the primary rRNA binding proteins, it binds directly to 16S rRNA where it nucleates assembly of the head domain of the 30S subunit. Is located at the subunit interface close to the decoding center, probably blocks exit of the E-site tRNA. This is Small ribosomal subunit protein uS7 from Brevibacillus brevis (strain 47 / JCM 6285 / NBRC 100599).